Consider the following 409-residue polypeptide: Tryptophan synthase beta chain (409 aa).

Lysine 95 is modified (N6-(pyridoxal phosphate)lysine).

The protein belongs to the TrpB family. As to quaternary structure, tetramer of two alpha and two beta chains. Pyridoxal 5'-phosphate serves as cofactor.

It catalyses the reaction (1S,2R)-1-C-(indol-3-yl)glycerol 3-phosphate + L-serine = D-glyceraldehyde 3-phosphate + L-tryptophan + H2O. It participates in amino-acid biosynthesis; L-tryptophan biosynthesis; L-tryptophan from chorismate: step 5/5. The beta subunit is responsible for the synthesis of L-tryptophan from indole and L-serine. In Pseudomonas syringae pv. syringae (strain B728a), this protein is Tryptophan synthase beta chain.